The following is a 400-amino-acid chain: Tryptophan synthase beta chain (400 aa).

Lys-92 bears the N6-(pyridoxal phosphate)lysine mark.

It belongs to the TrpB family. Tetramer of two alpha and two beta chains. The cofactor is pyridoxal 5'-phosphate.

The enzyme catalyses (1S,2R)-1-C-(indol-3-yl)glycerol 3-phosphate + L-serine = D-glyceraldehyde 3-phosphate + L-tryptophan + H2O. Its pathway is amino-acid biosynthesis; L-tryptophan biosynthesis; L-tryptophan from chorismate: step 5/5. In terms of biological role, the beta subunit is responsible for the synthesis of L-tryptophan from indole and L-serine. The sequence is that of Tryptophan synthase beta chain from Neisseria meningitidis serogroup C (strain 053442).